Here is a 523-residue protein sequence, read N- to C-terminus: Leucine-rich repeat-containing protein 27 (523 aa).

The interval 1-26 (MEDTSPQAVAEKAAKDPKAAKDLKDD) is disordered. Residues 12 to 26 (KAAKDPKAAKDLKDD) show a composition bias toward basic and acidic residues. LRR repeat units follow at residues 55 to 76 (SSPVLDLSQRGLRHLGKFFKIP), 77 to 98 (NLQQLHLQRNLLREIPEDFFQL), 101 to 122 (NLTWLDLRYNKIKVLPSGIGSH), 124 to 145 (HLKTLLLERNPIKMLPVELGQV), and 147 to 168 (TLTALNLRHCPLEFPPRLIVQK). Disordered regions lie at residues 206 to 236 (QYPVLPLPRKGSPSENSLNDPDQEKEKADFF) and 372 to 394 (REQTQHMRTRRELSKLQPPHSNM). 2 stretches are compositionally biased toward basic and acidic residues: residues 227-236 (DQEKEKADFF) and 372-385 (REQTQHMRTRRELS). Coiled coils occupy residues 335–374 (VHANRMEDTHKAALQELQEKETVLEQRRRDKRALQEWREQ) and 463–494 (MQDIKTANQDLETTKKLQEELRKLKVEMTLNK). The disordered stretch occupies residues 503-523 (GNLSLHPPASQPQNIFFNTKS). Polar residues predominate over residues 513–523 (QPQNIFFNTKS).

The protein is Leucine-rich repeat-containing protein 27 (Lrrc27) of Mus musculus (Mouse).